A 932-amino-acid polypeptide reads, in one-letter code: DNA mismatch repair protein MutS (932 aa).

615–622 (GPNMAGKS) contacts ATP.

This sequence belongs to the DNA mismatch repair MutS family.

Functionally, this protein is involved in the repair of mismatches in DNA. It is possible that it carries out the mismatch recognition step. This protein has a weak ATPase activity. This is DNA mismatch repair protein MutS from Clostridium botulinum (strain Kyoto / Type A2).